Here is a 526-residue protein sequence, read N- to C-terminus: Maturase K (526 aa).

It belongs to the intron maturase 2 family. MatK subfamily.

The protein localises to the plastid. It is found in the chloroplast. Functionally, usually encoded in the trnK tRNA gene intron. Probably assists in splicing its own and other chloroplast group II introns. In Iris setosa (Hiougi-ayame), this protein is Maturase K.